The chain runs to 345 residues: Short-wave-sensitive opsin 1 (345 aa).

At 1 to 30 the chain is on the extracellular side; it reads MSEEEFYLFKNISSVGPWDGPQYHIAPVWA. N11 carries N-linked (GlcNAc...) asparagine glycosylation. A helical membrane pass occupies residues 31–55; that stretch reads FYLQAAFMGTVFLIGFPLNAMVLVA. Over 56-67 the chain is Cytoplasmic; sequence TLRYKKLRQPLN. Residues 68–93 traverse the membrane as a helical segment; sequence YILVNVSFGGFLLCIFSVFPVFVASC. Over 94–107 the chain is Extracellular; the sequence is NGYFVFGRHVCALE. C104 and C181 are oxidised to a cystine. The chain crosses the membrane as a helical span at residues 108-127; sequence GFLGTVAGLVTGWSLAFLAF. Topologically, residues 128–146 are cytoplasmic; sequence ERYIVICKPFGNFRFSSKH. Residues 147 to 170 form a helical membrane-spanning segment; sequence ALTVVLATWTIGIGVSIPPFFGWS. At 171 to 196 the chain is on the extracellular side; sequence RFIPEGLQCSCGPDWYTVGTKYRSES. A helical membrane pass occupies residues 197–224; that stretch reads YTWFLFIFCFIVPLSLICFSYTQLLRAL. Residues 225-246 lie on the Cytoplasmic side of the membrane; sequence KAVAAQQQESATTQKAEREVSR. A helical transmembrane segment spans residues 247–270; it reads MVVVMVGSFCVCYVPYAAFAMYMV. At 271-278 the chain is on the extracellular side; the sequence is NNRNHGLD. Residues 279 to 303 traverse the membrane as a helical segment; sequence LRLVTIPSFFSKSACIYNPIIYCFM. Residue K290 is modified to N6-(retinylidene)lysine. At 304–345 the chain is on the cytoplasmic side; it reads NKQFQACIMKMVCGKAMTDESDTCSSQKTEVSTVSSTQVGPN.

It belongs to the G-protein coupled receptor 1 family. Opsin subfamily. In terms of processing, phosphorylated on some or all of the serine and threonine residues present in the C-terminal region. In terms of tissue distribution, the three color pigments are found in the cone photoreceptor cells. Expressed throughout the epidermis and dermis, primarily in the stratum granulosum in the facial and abdominal skin (at protein level). Expressed in dermal fibroblasts (at protein level). Expressed in melanocytes (at protein level).

It localises to the cell membrane. Its subcellular location is the photoreceptor inner segment. It is found in the cell projection. The protein resides in the cilium. The protein localises to the photoreceptor outer segment. It localises to the cytoplasm. Its subcellular location is the perinuclear region. Functionally, visual pigments are the light-absorbing molecules that mediate vision. They consist of an apoprotein, opsin, covalently linked to cis-retinal. Required for the maintenance of cone outer segment organization in the ventral retina, but not essential for the maintenance of functioning cone photoreceptors. Involved in ensuring correct abundance and localization of retinal membrane proteins. May increase spectral sensitivity in dim light. The protein is Short-wave-sensitive opsin 1 (OPN1SW) of Homo sapiens (Human).